Consider the following 692-residue polypeptide: ATP-dependent RNA helicase MSS116, mitochondrial (692 aa).

Residues Met1 to Lys37 constitute a mitochondrion transit peptide. A disordered region spans residues Ser82 to Lys113. The segment covering Glu89 to Lys99 has biased composition (basic and acidic residues). Residues Asp130 to Gln158 carry the Q motif motif. The region spanning Val162–Tyr349 is the Helicase ATP-binding domain. Ala175–Thr182 contacts ATP. The short motif at Asp290–Asp293 is the DEAD box element. The 151-residue stretch at Tyr384–Asn534 folds into the Helicase C-terminal domain. The interval Asn643 to Glu692 is disordered. Positions Gly661 to Ser670 are enriched in gly residues.

This sequence belongs to the DEAD box helicase family. DDX18/HAS1 subfamily.

The protein localises to the mitochondrion matrix. The catalysed reaction is ATP + H2O = ADP + phosphate + H(+). Its function is as follows. ATP-dependent RNA helicase required for mitochondrial splicing of group I and II introns. Also required for efficient mitochondrial translation. This chain is ATP-dependent RNA helicase MSS116, mitochondrial (MSS116), found in Lodderomyces elongisporus (strain ATCC 11503 / CBS 2605 / JCM 1781 / NBRC 1676 / NRRL YB-4239) (Yeast).